The sequence spans 474 residues: Chromosomal replication initiator protein DnaA (474 aa).

Residues 1 to 90 form a domain I, interacts with DnaA modulators region; it reads MSSSLWLQCL…RQVVVPSSQI (90 aa). The interval 91–137 is domain II; that stretch reads IAPAAPAVTLAPRPLPATRILQDDAPSRSWEPAPSPVQPESKSGYRS. The tract at residues 112 to 137 is disordered; sequence QDDAPSRSWEPAPSPVQPESKSGYRS. Positions 128–137 are enriched in polar residues; sequence QPESKSGYRS. The tract at residues 138–354 is domain III, AAA+ region; the sequence is NVNPKHNFNN…GALNRVIANA (217 aa). The ATP site is built by G182, G184, K185, and T186. The segment at 355–474 is domain IV, binds dsDNA; that stretch reads NFTGRAITID…YSNLIRTLST (120 aa).

Belongs to the DnaA family. Oligomerizes as a right-handed, spiral filament on DNA at oriC.

It is found in the cytoplasm. Functionally, plays an essential role in the initiation and regulation of chromosomal replication. ATP-DnaA binds to the origin of replication (oriC) to initiate formation of the DNA replication initiation complex once per cell cycle. Binds the DnaA box (a 9 base pair repeat at the origin) and separates the double-stranded (ds)DNA. Forms a right-handed helical filament on oriC DNA; dsDNA binds to the exterior of the filament while single-stranded (ss)DNA is stabiized in the filament's interior. The ATP-DnaA-oriC complex binds and stabilizes one strand of the AT-rich DNA unwinding element (DUE), permitting loading of DNA polymerase. After initiation quickly degrades to an ADP-DnaA complex that is not apt for DNA replication. Binds acidic phospholipids. This chain is Chromosomal replication initiator protein DnaA, found in Photobacterium profundum (strain SS9).